A 1358-amino-acid chain; its full sequence is DNA-directed RNA polymerase subunit beta (1358 aa).

This sequence belongs to the RNA polymerase beta chain family. In terms of assembly, the RNAP catalytic core consists of 2 alpha, 1 beta, 1 beta' and 1 omega subunit. When a sigma factor is associated with the core the holoenzyme is formed, which can initiate transcription.

It catalyses the reaction RNA(n) + a ribonucleoside 5'-triphosphate = RNA(n+1) + diphosphate. Functionally, DNA-dependent RNA polymerase catalyzes the transcription of DNA into RNA using the four ribonucleoside triphosphates as substrates. This chain is DNA-directed RNA polymerase subunit beta, found in Francisella tularensis subsp. mediasiatica (strain FSC147).